Here is a 630-residue protein sequence, read N- to C-terminus: Vacuolar protein 8 (630 aa).

Gly-2 carries the N-myristoyl glycine lipid modification. ARM repeat units follow at residues 74 to 115 (EITE…NLAV), 117 to 156 (AENKLLVVSLGGLEPLIRQMLSPNVEVQCNAVGCITNLAT), 158 to 197 (DENKTQIAKSGALVPLTRLAKSKDMRVQRNATGALLNMTH), 199 to 238 (DENRQQLVAAGAIPVLVSLLNSPDTDVQYYCTTALSNIAV), 242 to 281 (NRKKLAQSEPKLVQSLVQLMDSQSLKVQCQAALALRNLAS), 283 to 322 (SKYQLEIVKFGGLKPLLRLLHSSYLPLILSAAACVRNVSI), 324 to 364 (PANE…NLAA), 408 to 447 (DDLKPQLLEMGICEVLIPLTNSPSVEVQGNSAAALGNLSS), and 456 to 495 (FNAVWNKPDGGLHAYLVRFLSSADITFQHIAVWTIVQLLE). 2 disordered regions span residues 519-558 (AKSPPPSRAGGAPRHDPNDPSAGSSEDEFEDGLTDQEGEG) and 572-630 (EVGE…GRDR). A compositionally biased stretch (acidic residues) spans 543–558 (SEDEFEDGLTDQEGEG). Residues 598 to 607 (GQGQTSQVGS) are compositionally biased toward polar residues.

It belongs to the beta-catenin family.

It localises to the vacuole membrane. In terms of biological role, functions in both vacuole inheritance and protein targeting from the cytoplasm to vacuole. The sequence is that of Vacuolar protein 8 (VAC8) from Cryptococcus neoformans var. neoformans serotype D (strain B-3501A) (Filobasidiella neoformans).